Reading from the N-terminus, the 597-residue chain is FERM domain-containing protein 3 (597 aa).

One can recognise an FERM domain in the interval 32–312 (MRCTIRLLDD…ENQAFYKYAK (281 aa)). Residues 383-403 (LLPSPSEQEEELPLGEGVPLP) form a disordered region. Residues 531–551 (LLVVGLGLLLFVFPLLLLLLE) traverse the membrane as a helical segment.

In terms of tissue distribution, ovary-specific.

Its subcellular location is the membrane. Functionally, putative tumor suppressor gene that may be implicated in the origin and progression of lung cancer. The chain is FERM domain-containing protein 3 (FRMD3) from Homo sapiens (Human).